Reading from the N-terminus, the 410-residue chain is Beta-arrestin-1 (410 aa).

The tract at residues 1-163 (MGDKGTRVFK…LEEKIHKRNS (163 aa)) is interaction with SRC. An interaction with CHRM2 region spans residues 45–86 (PEYLKERRVYVTLTCAFRYGREDLDVLGLTFRKDLFVANVQS). Tyr-47 is modified (phosphotyrosine). 1D-myo-inositol hexakisphosphate is bound by residues Lys-250, Met-255, Lys-324, and Lys-326. The segment at 318–410 (IVSYKVKVKL…GTGSPQLNNR (93 aa)) is interaction with TRAF6. The [DE]-X(1,2)-F-X-X-[FL]-X-X-X-R motif motif lies at 385 to 395 (RQRLKGMKDDK). The segment at 389-410 (KGMKDDKEEEENGTGSPQLNNR) is disordered. Residues 401 to 410 (GTGSPQLNNR) show a composition bias toward polar residues. Position 404 is a phosphoserine; by GRK5 (Ser-404).

The protein belongs to the arrestin family. As to quaternary structure, monomer. Homodimer. Homooligomer; the self-association is mediated by InsP6-binding. Heterooligomer with ARRB2; the association is mediated by InsP6-binding. Interacts with ADRB2 (phosphorylated). Interacts with CHRM2 (phosphorylated). Interacts with LHCGR. Interacts with CYTH2 and CASR. Interacts with AP2B1 (dephosphorylated); phosphorylation of AP2B1 disrupts the interaction. Interacts (dephosphorylated at Ser-404) with CLTC. Interacts with CCR2 and GRK2. Interacts with CRR5. Interacts with PTAFR (phosphorylated on serine residues). Interacts with CLTC and MAP2K3. Interacts with CREB1. Interacts with TRAF6. Interacts with IGF1R and MDM2. Interacts with C5AR1. Interacts with PDE4D. Interacts with SRC (via the SH3 domain and the protein kinase domain); the interaction is independent of the phosphorylation state of SRC C-terminus. Interacts with TACR1. Interacts with RAF1. Interacts with CHUK, IKBKB and MAP3K14. Interacts with DVL1; the interaction is enhanced by phosphorylation of DVL1. Interacts with DVL2; the interaction is enhanced by phosphorylation of DVL2. Interacts with IGF1R. Associates with MAP kinase p38. Part of a MAPK signaling complex consisting of TACR1, ARRB1, SRC, MAPK1 (activated) and MAPK3 (activated). Part of a MAPK signaling complex consisting of F2RL1, ARRB1, RAF1, MAPK1 (activated) and MAPK3 (activated). Interacts with GPR143. Interacts with MAP2K4/MKK4. Interacts with HCK and CXCR1 (phosphorylated). Interacts with ACKR3 and ACKR4. Interacts with ARRDC1; the interaction is direct. Interacts with GPR61, GPR62 and GPR135. Post-translationally, constitutively phosphorylated at in the cytoplasm. At the plasma membrane, is rapidly dephosphorylated, a process that is required for clathrin binding and ADRB2 endocytosis but not for ADRB2 binding and desensitization. Once internalized, is rephosphorylated. In terms of processing, the ubiquitination status appears to regulate the formation and trafficking of beta-arrestin-GPCR complexes and signaling. Ubiquitination appears to occur GPCR-specific. Ubiquitinated by MDM2; the ubiquitination is required for rapid internalization of ADRB2. Deubiquitinated by USP33; the deubiquitination leads to a dissociation of the beta-arrestin-GPCR complex. Stimulation of a class A GPCR, such as ADRB2, induces transient ubiquitination and subsequently promotes association with USP33.

It is found in the cytoplasm. Its subcellular location is the nucleus. The protein localises to the cell membrane. The protein resides in the membrane. It localises to the clathrin-coated pit. It is found in the cell projection. Its subcellular location is the pseudopodium. The protein localises to the cytoplasmic vesicle. In terms of biological role, functions in regulating agonist-mediated G-protein coupled receptor (GPCR) signaling by mediating both receptor desensitization and resensitization processes. During homologous desensitization, beta-arrestins bind to the GPRK-phosphorylated receptor and sterically preclude its coupling to the cognate G-protein; the binding appears to require additional receptor determinants exposed only in the active receptor conformation. The beta-arrestins target many receptors for internalization by acting as endocytic adapters (CLASPs, clathrin-associated sorting proteins) and recruiting the GPRCs to the adapter protein 2 complex 2 (AP-2) in clathrin-coated pits (CCPs). However, the extent of beta-arrestin involvement appears to vary significantly depending on the receptor, agonist and cell type. Internalized arrestin-receptor complexes traffic to intracellular endosomes, where they remain uncoupled from G-proteins. Two different modes of arrestin-mediated internalization occur. Class A receptors, like ADRB2, OPRM1, ENDRA, D1AR and ADRA1B dissociate from beta-arrestin at or near the plasma membrane and undergo rapid recycling. Class B receptors, like AVPR2, AGTR1, NTSR1, TRHR and TACR1 internalize as a complex with arrestin and traffic with it to endosomal vesicles, presumably as desensitized receptors, for extended periods of time. Receptor resensitization then requires that receptor-bound arrestin is removed so that the receptor can be dephosphorylated and returned to the plasma membrane. Involved in internalization of P2RY4 and UTP-stimulated internalization of P2RY2. Involved in phosphorylation-dependent internalization of OPRD1 ands subsequent recycling. Involved in the degradation of cAMP by recruiting cAMP phosphodiesterases to ligand-activated receptors. Beta-arrestins function as multivalent adapter proteins that can switch the GPCR from a G-protein signaling mode that transmits short-lived signals from the plasma membrane via small molecule second messengers and ion channels to a beta-arrestin signaling mode that transmits a distinct set of signals that are initiated as the receptor internalizes and transits the intracellular compartment. Acts as a signaling scaffold for MAPK pathways such as MAPK1/3 (ERK1/2). ERK1/2 activated by the beta-arrestin scaffold is largely excluded from the nucleus and confined to cytoplasmic locations such as endocytic vesicles, also called beta-arrestin signalosomes. Recruits c-Src/SRC to ADRB2 resulting in ERK activation. GPCRs for which the beta-arrestin-mediated signaling relies on both ARRB1 and ARRB2 (codependent regulation) include ADRB2, F2RL1 and PTH1R. For some GPCRs the beta-arrestin-mediated signaling relies on either ARRB1 or ARRB2 and is inhibited by the other respective beta-arrestin form (reciprocal regulation). Inhibits ERK1/2 signaling in AGTR1- and AVPR2-mediated activation (reciprocal regulation). Is required for SP-stimulated endocytosis of NK1R and recruits c-Src/SRC to internalized NK1R resulting in ERK1/2 activation, which is required for the antiapoptotic effects of SP. Is involved in proteinase-activated F2RL1-mediated ERK activity. Acts as a signaling scaffold for the AKT1 pathway. Is involved in alpha-thrombin-stimulated AKT1 signaling. Is involved in IGF1-stimulated AKT1 signaling leading to increased protection from apoptosis. Involved in activation of the p38 MAPK signaling pathway and in actin bundle formation. Involved in F2RL1-mediated cytoskeletal rearrangement and chemotaxis. Involved in AGTR1-mediated stress fiber formation by acting together with GNAQ to activate RHOA. Appears to function as signaling scaffold involved in regulation of MIP-1-beta-stimulated CCR5-dependent chemotaxis. Involved in attenuation of NF-kappa-B-dependent transcription in response to GPCR or cytokine stimulation by interacting with and stabilizing CHUK. May serve as nuclear messenger for GPCRs. Involved in OPRD1-stimulated transcriptional regulation by translocating to CDKN1B and FOS promoter regions and recruiting EP300 resulting in acetylation of histone H4. Involved in regulation of LEF1 transcriptional activity via interaction with DVL1 and/or DVL2 Also involved in regulation of receptors other than GPCRs. Involved in Toll-like receptor and IL-1 receptor signaling through the interaction with TRAF6 which prevents TRAF6 autoubiquitination and oligomerization required for activation of NF-kappa-B and JUN. Involved in IL8-mediated granule release in neutrophils. Binds phosphoinositides. Binds inositolhexakisphosphate (InsP6). Required for atypical chemokine receptor ACKR2-induced RAC1-LIMK1-PAK1-dependent phosphorylation of cofilin (CFL1) and for the up-regulation of ACKR2 from endosomal compartment to cell membrane, increasing its efficiency in chemokine uptake and degradation. Involved in the internalization of the atypical chemokine receptor ACKR3. Negatively regulates the NOTCH signaling pathway by mediating the ubiquitination and degradation of NOTCH1 by ITCH. Participates in the recruitment of the ubiquitin-protein ligase to the receptor. In Macaca fascicularis (Crab-eating macaque), this protein is Beta-arrestin-1 (ARRB1).